Reading from the N-terminus, the 106-residue chain is NADH dehydrogenase [ubiquinone] iron-sulfur protein 5 (106 aa).

One can recognise a CHCH domain in the interval 30 to 74 (APRCHAFEKEWIECAHGIGAIRAEKECKIEYDDFIECLLRQKTMR). Short sequence motifs (cx9C motif) lie at residues 33–43 (CHAFEKEWIEC) and 56–66 (CKIEYDDFIEC). 2 disulfides stabilise this stretch: Cys-33-Cys-66 and Cys-43-Cys-56. Positions 87–106 (IKEGKYTPPPHHIGKGEPRP) are disordered.

This sequence belongs to the complex I NDUFS5 subunit family. As to quaternary structure, mammalian complex I is composed of 45 different subunits. This is a component of the iron-sulfur (IP) fragment of the enzyme.

The protein resides in the mitochondrion inner membrane. It is found in the mitochondrion intermembrane space. Accessory subunit of the mitochondrial membrane respiratory chain NADH dehydrogenase (Complex I), that is believed not to be involved in catalysis. Complex I functions in the transfer of electrons from NADH to the respiratory chain. The immediate electron acceptor for the enzyme is believed to be ubiquinone. In Macaca fascicularis (Crab-eating macaque), this protein is NADH dehydrogenase [ubiquinone] iron-sulfur protein 5 (NDUFS5).